The primary structure comprises 280 residues: UPF0758 protein Atu1607 (280 aa).

The tract at residues 1–22 (MAKRPALPSADLSPTSGFEAGE) is disordered. One can recognise an MPN domain in the interval 158 to 280 (VLGSWSSVID…HASFKGLRLI (123 aa)). Histidine 229, histidine 231, and aspartate 242 together coordinate Zn(2+). The JAMM motif motif lies at 229 to 242 (HNHPSGDPTPSRAD).

It belongs to the UPF0758 family.

This Agrobacterium fabrum (strain C58 / ATCC 33970) (Agrobacterium tumefaciens (strain C58)) protein is UPF0758 protein Atu1607.